The following is a 156-amino-acid chain: Small ribosomal subunit protein uS7 (156 aa).

Belongs to the universal ribosomal protein uS7 family. Part of the 30S ribosomal subunit. Contacts proteins S9 and S11.

In terms of biological role, one of the primary rRNA binding proteins, it binds directly to 16S rRNA where it nucleates assembly of the head domain of the 30S subunit. Is located at the subunit interface close to the decoding center, probably blocks exit of the E-site tRNA. The polypeptide is Small ribosomal subunit protein uS7 (Gloeobacter violaceus (strain ATCC 29082 / PCC 7421)).